Consider the following 447-residue polypeptide: Phosphoglucosamine mutase (447 aa).

S104 serves as the catalytic Phosphoserine intermediate. Mg(2+) is bound by residues S104, D243, D245, and D247. Residue S104 is modified to Phosphoserine.

Belongs to the phosphohexose mutase family. Requires Mg(2+) as cofactor. Post-translationally, activated by phosphorylation.

It carries out the reaction alpha-D-glucosamine 1-phosphate = D-glucosamine 6-phosphate. Functionally, catalyzes the conversion of glucosamine-6-phosphate to glucosamine-1-phosphate. This is Phosphoglucosamine mutase from Corynebacterium jeikeium (strain K411).